The primary structure comprises 338 residues: Ornithine carbamoyltransferase, catabolic (338 aa).

Residues 65–68, Q92, R116, and 143–146 contribute to the carbamoyl phosphate site; these read STRT and HPTQ. Residues N175, D239, and 243–244 each bind L-ornithine; that span reads SM. Carbamoyl phosphate is bound by residues 280–281 and R325; that span reads CL.

Belongs to the aspartate/ornithine carbamoyltransferase superfamily. OTCase family.

It localises to the cytoplasm. It catalyses the reaction carbamoyl phosphate + L-ornithine = L-citrulline + phosphate + H(+). Its pathway is amino-acid degradation; L-arginine degradation via ADI pathway; carbamoyl phosphate from L-arginine: step 2/2. Functionally, reversibly catalyzes the transfer of the carbamoyl group from carbamoyl phosphate (CP) to the N(epsilon) atom of ornithine (ORN) to produce L-citrulline. The sequence is that of Ornithine carbamoyltransferase, catabolic from Treponema denticola (strain ATCC 35405 / DSM 14222 / CIP 103919 / JCM 8153 / KCTC 15104).